Here is a 341-residue protein sequence, read N- to C-terminus: Glucokinase (341 aa).

7 to 12 (GDIGGT) is a binding site for ATP.

This sequence belongs to the bacterial glucokinase family.

It is found in the cytoplasm. The catalysed reaction is D-glucose + ATP = D-glucose 6-phosphate + ADP + H(+). The protein is Glucokinase of Nostoc punctiforme (strain ATCC 29133 / PCC 73102).